The sequence spans 209 residues: Cilia- and flagella-associated protein 418 (209 aa).

Residues 1 to 76 (MAKDLDELLD…LINEIFEEPD (76 aa)) are required for interaction with FAM161A. A disordered region spans residues 24 to 58 (LDLGERPKGDGGGGSHSGDRNGAQEKETLRSTETF). Positions 40–58 (SGDRNGAQEKETLRSTETF) are enriched in basic and acidic residues.

As to quaternary structure, interacts (via N-terminus) with FAM161A (via central region); the interaction is direct. As to expression, expressed in multiple tissues, including the brain, kidney, lung, spleen, heart, trachea and testis. Expressed in the retina (at protein level).

It localises to the cytoplasm. The protein resides in the photoreceptor inner segment. In terms of biological role, may be involved in photoreceptor outer segment disk morphogenesis. This Mus musculus (Mouse) protein is Cilia- and flagella-associated protein 418.